The chain runs to 123 residues: Large ribosomal subunit protein bL12 (123 aa).

It belongs to the bacterial ribosomal protein bL12 family. In terms of assembly, homodimer. Part of the ribosomal stalk of the 50S ribosomal subunit. Forms a multimeric L10(L12)X complex, where L10 forms an elongated spine to which 2 to 4 L12 dimers bind in a sequential fashion. Binds GTP-bound translation factors.

Forms part of the ribosomal stalk which helps the ribosome interact with GTP-bound translation factors. Is thus essential for accurate translation. The sequence is that of Large ribosomal subunit protein bL12 from Burkholderia vietnamiensis (strain G4 / LMG 22486) (Burkholderia cepacia (strain R1808)).